Reading from the N-terminus, the 131-residue chain is SPbeta prophage-derived uncharacterized protein YoqY (131 aa).

The polypeptide is SPbeta prophage-derived uncharacterized protein YoqY (yoqY) (Bacillus subtilis (strain 168)).